Reading from the N-terminus, the 315-residue chain is Glutamyl-Q tRNA(Asp) synthetase (315 aa).

Residues 21–25 and glutamate 63 contribute to the L-glutamate site; that span reads RFAPS. The 'HIGH' region signature appears at 24-34; that stretch reads PSPSGLLHFGS. Zn(2+)-binding residues include cysteine 119, cysteine 121, tyrosine 133, and cysteine 137. Positions 190 and 208 each coordinate L-glutamate. Residues 251–255 carry the 'KMSKS' region motif; sequence KLSKQ. Lysine 254 is an ATP binding site.

The protein belongs to the class-I aminoacyl-tRNA synthetase family. GluQ subfamily. The cofactor is Zn(2+).

Functionally, catalyzes the tRNA-independent activation of glutamate in presence of ATP and the subsequent transfer of glutamate onto a tRNA(Asp). Glutamate is transferred on the 2-amino-5-(4,5-dihydroxy-2-cyclopenten-1-yl) moiety of the queuosine in the wobble position of the QUC anticodon. The chain is Glutamyl-Q tRNA(Asp) synthetase from Colwellia psychrerythraea (strain 34H / ATCC BAA-681) (Vibrio psychroerythus).